Consider the following 160-residue polypeptide: S-ribosylhomocysteine lyase (160 aa).

Positions 57, 61, and 127 each coordinate Fe cation.

Belongs to the LuxS family. In terms of assembly, homodimer. Requires Fe cation as cofactor.

The catalysed reaction is S-(5-deoxy-D-ribos-5-yl)-L-homocysteine = (S)-4,5-dihydroxypentane-2,3-dione + L-homocysteine. Its function is as follows. Involved in the synthesis of autoinducer 2 (AI-2) which is secreted by bacteria and is used to communicate both the cell density and the metabolic potential of the environment. The regulation of gene expression in response to changes in cell density is called quorum sensing. Catalyzes the transformation of S-ribosylhomocysteine (RHC) to homocysteine (HC) and 4,5-dihydroxy-2,3-pentadione (DPD). This Streptococcus uberis (strain ATCC BAA-854 / 0140J) protein is S-ribosylhomocysteine lyase.